Here is a 370-residue protein sequence, read N- to C-terminus: Dual-specificity RNA methyltransferase RlmN (370 aa).

Glutamate 93 serves as the catalytic Proton acceptor. Residues 99–337 form the Radical SAM core domain; the sequence is EEGRGTLCVS…VTTVRKTRGD (239 aa). Cysteine 106 and cysteine 343 are oxidised to a cystine. [4Fe-4S] cluster-binding residues include cysteine 113, cysteine 117, and cysteine 120. Residues 167 to 168, serine 199, 221 to 223, and asparagine 300 contribute to the S-adenosyl-L-methionine site; these read GE and SLH. Cysteine 343 serves as the catalytic S-methylcysteine intermediate.

This sequence belongs to the radical SAM superfamily. RlmN family. [4Fe-4S] cluster serves as cofactor.

It localises to the cytoplasm. The catalysed reaction is adenosine(2503) in 23S rRNA + 2 reduced [2Fe-2S]-[ferredoxin] + 2 S-adenosyl-L-methionine = 2-methyladenosine(2503) in 23S rRNA + 5'-deoxyadenosine + L-methionine + 2 oxidized [2Fe-2S]-[ferredoxin] + S-adenosyl-L-homocysteine. The enzyme catalyses adenosine(37) in tRNA + 2 reduced [2Fe-2S]-[ferredoxin] + 2 S-adenosyl-L-methionine = 2-methyladenosine(37) in tRNA + 5'-deoxyadenosine + L-methionine + 2 oxidized [2Fe-2S]-[ferredoxin] + S-adenosyl-L-homocysteine. Functionally, specifically methylates position 2 of adenine 2503 in 23S rRNA and position 2 of adenine 37 in tRNAs. m2A2503 modification seems to play a crucial role in the proofreading step occurring at the peptidyl transferase center and thus would serve to optimize ribosomal fidelity. The chain is Dual-specificity RNA methyltransferase RlmN from Francisella tularensis subsp. holarctica (strain LVS).